A 204-amino-acid chain; its full sequence is HTH-type transcriptional repressor KstR2 (204 aa).

The HTH tetR-type domain maps to 13 to 73; that stretch reads SGRRTELLDI…EILRGFLDDL (61 aa). A DNA-binding region (H-T-H motif) is located at residues 36–55; sequence TVRDIADAAGILSGSLYHHF.

Homodimer.

Its function is as follows. Controls the expression of a small regulon that may play a role in the utilization of cholesterol. The protein is HTH-type transcriptional repressor KstR2 (kstR2) of Rhodococcus jostii (strain RHA1).